The following is a 149-amino-acid chain: 3-dehydroquinate dehydratase (149 aa).

Tyr22 (proton acceptor) is an active-site residue. Residues Asn74, His80, and Asp87 each coordinate substrate. Catalysis depends on His100, which acts as the Proton donor. Residues 101–102 and Arg111 each bind substrate; that span reads LS.

The protein belongs to the type-II 3-dehydroquinase family. As to quaternary structure, homododecamer.

The catalysed reaction is 3-dehydroquinate = 3-dehydroshikimate + H2O. The protein operates within metabolic intermediate biosynthesis; chorismate biosynthesis; chorismate from D-erythrose 4-phosphate and phosphoenolpyruvate: step 3/7. Functionally, catalyzes a trans-dehydration via an enolate intermediate. The polypeptide is 3-dehydroquinate dehydratase (Vesicomyosocius okutanii subsp. Calyptogena okutanii (strain HA)).